We begin with the raw amino-acid sequence, 487 residues long: Kynureninase 1 (487 aa).

Residues Leu-147, Thr-148, 175-178 (FPSD), Ser-232, Asp-261, His-264, and Tyr-286 each bind pyridoxal 5'-phosphate. N6-(pyridoxal phosphate)lysine is present on Lys-287. Pyridoxal 5'-phosphate is bound by residues Trp-327 and Asn-355.

The protein belongs to the kynureninase family. Homodimer. It depends on pyridoxal 5'-phosphate as a cofactor.

The protein resides in the cytoplasm. It carries out the reaction L-kynurenine + H2O = anthranilate + L-alanine + H(+). The enzyme catalyses 3-hydroxy-L-kynurenine + H2O = 3-hydroxyanthranilate + L-alanine + H(+). It participates in amino-acid degradation; L-kynurenine degradation; L-alanine and anthranilate from L-kynurenine: step 1/1. It functions in the pathway cofactor biosynthesis; NAD(+) biosynthesis; quinolinate from L-kynurenine: step 2/3. In terms of biological role, catalyzes the cleavage of L-kynurenine (L-Kyn) and L-3-hydroxykynurenine (L-3OHKyn) into anthranilic acid (AA) and 3-hydroxyanthranilic acid (3-OHAA), respectively. The chain is Kynureninase 1 (bna5-1) from Aspergillus oryzae (strain ATCC 42149 / RIB 40) (Yellow koji mold).